The sequence spans 144 residues: uncharacterized protein (144 aa).

4 helical membrane passes run 7–29 (FPAS…RDLV), 51–73 (VAIG…FLLV), 85–107 (AVLA…VGAF), and 122–139 (HLHH…LIFV).

The protein localises to the cell membrane. This is an uncharacterized protein from Treponema pallidum (strain Nichols).